Reading from the N-terminus, the 493-residue chain is Probable mannosyl-oligosaccharide alpha-1,2-mannosidase 1B (493 aa).

The first 18 residues, 1–18, serve as a signal peptide directing secretion; sequence MHLPSLSVALALVSSSLA. N87 and N174 each carry an N-linked (GlcNAc...) asparagine glycan. C324 and C353 form a disulfide bridge. The Proton donor role is filled by E367. The N-linked (GlcNAc...) asparagine glycan is linked to N489.

This sequence belongs to the glycosyl hydrolase 47 family. In terms of assembly, monomer. It depends on Ca(2+) as a cofactor. The cofactor is Mg(2+).

The protein resides in the cytoplasmic vesicle lumen. It carries out the reaction N(4)-(alpha-D-Man-(1-&gt;2)-alpha-D-Man-(1-&gt;2)-alpha-D-Man-(1-&gt;3)-[alpha-D-Man-(1-&gt;2)-alpha-D-Man-(1-&gt;3)-[alpha-D-Man-(1-&gt;2)-alpha-D-Man-(1-&gt;6)]-alpha-D-Man-(1-&gt;6)]-beta-D-Man-(1-&gt;4)-beta-D-GlcNAc-(1-&gt;4)-beta-D-GlcNAc)-L-asparaginyl-[protein] (N-glucan mannose isomer 9A1,2,3B1,2,3) + 4 H2O = N(4)-(alpha-D-Man-(1-&gt;3)-[alpha-D-Man-(1-&gt;3)-[alpha-D-Man-(1-&gt;6)]-alpha-D-Man-(1-&gt;6)]-beta-D-Man-(1-&gt;4)-beta-D-GlcNAc-(1-&gt;4)-beta-D-GlcNAc)-L-asparaginyl-[protein] (N-glucan mannose isomer 5A1,2) + 4 beta-D-mannose. The catalysed reaction is N(4)-(alpha-D-Man-(1-&gt;2)-alpha-D-Man-(1-&gt;2)-alpha-D-Man-(1-&gt;3)-[alpha-D-Man-(1-&gt;3)-[alpha-D-Man-(1-&gt;2)-alpha-D-Man-(1-&gt;6)]-alpha-D-Man-(1-&gt;6)]-beta-D-Man-(1-&gt;4)-beta-D-GlcNAc-(1-&gt;4)-beta-D-GlcNAc)-L-asparaginyl-[protein] (N-glucan mannose isomer 8A1,2,3B1,3) + 3 H2O = N(4)-(alpha-D-Man-(1-&gt;3)-[alpha-D-Man-(1-&gt;3)-[alpha-D-Man-(1-&gt;6)]-alpha-D-Man-(1-&gt;6)]-beta-D-Man-(1-&gt;4)-beta-D-GlcNAc-(1-&gt;4)-beta-D-GlcNAc)-L-asparaginyl-[protein] (N-glucan mannose isomer 5A1,2) + 3 beta-D-mannose. It participates in protein modification; protein glycosylation. Involved in the maturation of Asn-linked oligosaccharides. Progressively trims alpha-1,2-linked mannose residues from Man(9)GlcNAc(2) to produce Man(5)GlcNAc(2). This chain is Probable mannosyl-oligosaccharide alpha-1,2-mannosidase 1B (mns1B), found in Neosartorya fischeri (strain ATCC 1020 / DSM 3700 / CBS 544.65 / FGSC A1164 / JCM 1740 / NRRL 181 / WB 181) (Aspergillus fischerianus).